Here is a 1295-residue protein sequence, read N- to C-terminus: MNKIYSLKYSAATGGLIAVSELAKRVSGKTNRKLVATMLSLAVAGTVNAANIDISNVWARDYLDLAQNKGIFQPGATDVTITLKNGDKFSFHNLSIPDFSGAAASGAATAIGGSYSVTVAHNKKNPQAAETQVYAQSSYRVVDRRNSNDFEIQRLNKFVVETVGATPAETNPTTYSDALERYGIVTSDGSKKIIGFRAGSGGTSFINGESKISTNSAYSHDLLSASLFEVTQWDSYGMMIYKNDKTFRNLEIFGDSGSGAYLYDNKLEKWVLVGTTHGIASVNGDQLTWITKYNDKLVSELKDTYSHKINLNGNNVTIKNTDITLHQNNADTTGTQEKITKDKDIVFTNGGDVLFKDNLDFGSGGIIFDEGHEYNINGQGFTFKGAGIDIGKESIVNWNALYSSDDVLHKIGPGTLNVQKKQGANIKIGEGNVILNEEGTFNNIYLASGNGKVILNKDNSLGNDQYAGIFFTKRGGTLDLNGHNQTFTRIAATDDGTTITNSDTTKEAVLAINNEDSYIYHGNINGNIKLTHNINSQDKKTNAKLILDGSVNTKNDVEVSNASLTMQGHATEHAIFRSSANHCSLVFLCGTDWVTVLKETESSYNKKFNSDYKSNNQQTSFDQPDWKTGVFKFDTLHLNNADFSISRNANVEGNISANKSAITIGDKNVYIDNLAGKNITNNGFDFKQTISTNLSIGETKFTGGITAHNSQIAIGDQAVVTLNGATFLDNTPISIDKGAKVIAQNSMFTTKGIDISGELTMMGIPEQNSKTVTPGLHYAADGFRLSGGNANFIARNMASVTGNIYADDAATITLGQPETETPTISSAYQAWAETLLYGFDTAYRGAITAPKATVSMNNAIWHLNSQSSINRLETKDSMVRFTGDNGKFTTLTVNNLTIDDSAFVLRANLAQADQLVVNKSLSGKNNLLLVDFIEKNGNSNGLNIDLVSAPKGTAVDVFKATTRSIGFSDVTPVIEQKNDTDKATWTLIGYKSVANADAAKKATLLMSGGYKAFLAEVNNLNKRMGDLRDINGESGAWARIISGTGSAGGGFSDNYTHVQVGADNKHELDGLDLFTGVTMTYTDSHAGSDAFSGETKSVGAGLYASAMFESGAYIDLIGKYVHHDNEYTATFAGLGTRDYSSHSWYAGAEVGYRYHVTDSAWIEPQAELVYGAVSGKQFSWKDQGMNLTMKDKDFNPLIGRTGVDVGKSFSGKDWKVTARAGLGYQFDLFANGETVLRDASGEKRIKGEKDGRMLMNVGLNAEIRDNLRFGLEFEKSAFGKYNVDNAINANFRYSF.

An N-terminal signal peptide occupies residues 1 to 49; sequence MNKIYSLKYSAATGGLIAVSELAKRVSGKTNRKLVATMLSLAVAGTVNA. The Peptidase S6 domain maps to 51–300; that stretch reads NIDISNVWAR…TKYNDKLVSE (250 aa). Catalysis depends on charge relay system residues His121, Asp149, and Ser256. The 267-residue stretch at 1029–1295 folds into the Autotransporter domain; it reads DINGESGAWA…AINANFRYSF (267 aa).

Cleaved to release the mature protein from the outer membrane.

The protein resides in the periplasm. The protein localises to the secreted. Its subcellular location is the cell surface. It is found in the cell outer membrane. Inhibited by phenylmethylsulfonyl fluoride and Pefabloc. Functionally, shows serine protease activity and displays cytophatic activity, including elongation, rounding, and detachment of a proportion of the cells from monolayer in culture. Triggers vacuolation within the cytoplasm of the human bladder and kidney cells. The polypeptide is Serine protease sat autotransporter (sat) (Escherichia coli O6:H1 (strain CFT073 / ATCC 700928 / UPEC)).